We begin with the raw amino-acid sequence, 361 residues long: Probable mannitol dehydrogenase (361 aa).

Zn(2+) is bound by residues Cys-51, His-73, Cys-104, Cys-107, Cys-110, Cys-118, and Cys-167.

The protein belongs to the zinc-containing alcohol dehydrogenase family. Zn(2+) serves as cofactor.

It catalyses the reaction D-mannitol + NAD(+) = D-mannose + NADH + H(+). Functionally, oxidizes mannitol to mannose. Provides the initial step by which translocated mannitol is committed to central metabolism and, by regulating mannitol pool size, is important in regulating salt tolerance at the cellular level. This Mesembryanthemum crystallinum (Common ice plant) protein is Probable mannitol dehydrogenase (ELI3).